Reading from the N-terminus, the 156-residue chain is Small ribosomal subunit protein uS7 (156 aa).

This sequence belongs to the universal ribosomal protein uS7 family. In terms of assembly, part of the 30S ribosomal subunit. Contacts proteins S9 and S11.

Its function is as follows. One of the primary rRNA binding proteins, it binds directly to 16S rRNA where it nucleates assembly of the head domain of the 30S subunit. Is located at the subunit interface close to the decoding center, probably blocks exit of the E-site tRNA. This Burkholderia ambifaria (strain MC40-6) protein is Small ribosomal subunit protein uS7.